The following is a 603-amino-acid chain: Beta-hexosaminidase (603 aa).

The first 19 residues, 1–19 (MAYFRLYAVLLAVASSVAA), serve as a signal peptide directing secretion. Residues D225, H278, and E349 each act as charge relay system in the active site. The cysteines at positions 293 and 354 are disulfide-linked. The N-linked (GlcNAc...) asparagine glycan is linked to N356. C451 and C486 form a disulfide bridge. N503 and N528 each carry an N-linked (GlcNAc...) asparagine glycan. Cysteines 586 and 593 form a disulfide.

The protein belongs to the glycosyl hydrolase 20 family. In terms of assembly, homodimer.

It is found in the secreted. It carries out the reaction Hydrolysis of terminal non-reducing N-acetyl-D-hexosamine residues in N-acetyl-beta-D-hexosaminides.. Functionally, part of the binary chitinolytic system. Involved in hydrolysis of chitobiose and higher chito-oligomers (produced from cell wall chitin by endochitinases), thus contributing to the formation of germ tubes, fruit-bodies and septa during hyphenation. Hydrolyzes synthetic substrates p-nitrophenyl-beta-N-acetyl-glucosamine (pNP-beta-GlcNAc), p-nitrophenyl-beta-N-acetyl-galactosamine (pNP-beta-GalNAc) and 5-bromo-4-chloro-3-indoyl-beta-D-N-glucosaminide (X-GlcNAc). The chain is Beta-hexosaminidase from Emericella nidulans (Aspergillus nidulans).